The primary structure comprises 229 residues: Orotidine 5'-phosphate decarboxylase (229 aa).

Substrate-binding positions include Asp10, Lys32, 59-68 (DLKFHDIPNT), Thr119, Arg180, Gln189, Gly209, and Arg210. Lys61 (proton donor) is an active-site residue.

Belongs to the OMP decarboxylase family. Type 1 subfamily. In terms of assembly, homodimer.

The enzyme catalyses orotidine 5'-phosphate + H(+) = UMP + CO2. It participates in pyrimidine metabolism; UMP biosynthesis via de novo pathway; UMP from orotate: step 2/2. In terms of biological role, catalyzes the decarboxylation of orotidine 5'-monophosphate (OMP) to uridine 5'-monophosphate (UMP). The protein is Orotidine 5'-phosphate decarboxylase of Legionella pneumophila subsp. pneumophila (strain Philadelphia 1 / ATCC 33152 / DSM 7513).